The following is a 163-amino-acid chain: 6,7-dimethyl-8-ribityllumazine synthase (163 aa).

Residues phenylalanine 22, 56–58 (TFE), and 80–82 (AVI) each bind 5-amino-6-(D-ribitylamino)uracil. Residue 85 to 86 (GT) participates in (2S)-2-hydroxy-3-oxobutyl phosphate binding. Histidine 88 acts as the Proton donor in catalysis. Methionine 113 contributes to the 5-amino-6-(D-ribitylamino)uracil binding site. Position 127 (arginine 127) interacts with (2S)-2-hydroxy-3-oxobutyl phosphate.

This sequence belongs to the DMRL synthase family.

The enzyme catalyses (2S)-2-hydroxy-3-oxobutyl phosphate + 5-amino-6-(D-ribitylamino)uracil = 6,7-dimethyl-8-(1-D-ribityl)lumazine + phosphate + 2 H2O + H(+). The protein operates within cofactor biosynthesis; riboflavin biosynthesis; riboflavin from 2-hydroxy-3-oxobutyl phosphate and 5-amino-6-(D-ribitylamino)uracil: step 1/2. Catalyzes the formation of 6,7-dimethyl-8-ribityllumazine by condensation of 5-amino-6-(D-ribitylamino)uracil with 3,4-dihydroxy-2-butanone 4-phosphate. This is the penultimate step in the biosynthesis of riboflavin. This is 6,7-dimethyl-8-ribityllumazine synthase from Anaeromyxobacter sp. (strain Fw109-5).